The sequence spans 623 residues: Protein FAM234B (623 aa).

Residues 1 to 82 (MATVLSRALK…TSERAPEGYP (82 aa)) form a disordered region. The chain crosses the membrane as a helical span at residues 104–124 (AVFLLTVVISMILVLVCAFLI).

It belongs to the FAM234 family.

It localises to the membrane. The protein resides in the golgi outpost. The protein localises to the cytoplasm. It is found in the cytoskeleton. Its subcellular location is the microtubule organizing center. In Gallus gallus (Chicken), this protein is Protein FAM234B (FAM234B).